We begin with the raw amino-acid sequence, 1760 residues long: Chitin synthase A (1760 aa).

N-linked (GlcNAc...) asparagine glycosylation is present at N157. A run of 2 helical transmembrane segments spans residues 729 to 749 (IWTG…LRFV) and 765 to 785 (LVLV…IIAF). Residues N876 and N996 are each glycosylated (N-linked (GlcNAc...) asparagine). A helical transmembrane segment spans residues 1027 to 1047 (ILLAFTCLICAVILVKFLAAL). N1392 carries N-linked (GlcNAc...) asparagine glycosylation. The next 3 helical transmembrane spans lie at 1417 to 1437 (FVVL…VYLG), 1449 to 1469 (IPII…IIFI), and 1477 to 1497 (IGWM…LPMY). Residues N1557, N1645, and N1650 are each glycosylated (N-linked (GlcNAc...) asparagine). Positions 1670-1691 (DNLLGVPRPNSRSPVGGYTSRP) are disordered. The 57-residue stretch at 1702–1758 (GPDEMAITDAIRSCLAEVDLDTVTKKQVRALVEQRLQATLTGDKRAFLDRQIDQELA) folds into the DEK-C domain.

The protein belongs to the chitin synthase family. Class V subfamily.

The protein resides in the cell membrane. The catalysed reaction is [(1-&gt;4)-N-acetyl-beta-D-glucosaminyl](n) + UDP-N-acetyl-alpha-D-glucosamine = [(1-&gt;4)-N-acetyl-beta-D-glucosaminyl](n+1) + UDP + H(+). In terms of biological role, polymerizes chitin, a structural polymer of the cell wall and septum, by transferring the sugar moiety of UDP-GlcNAc to the non-reducing end of the growing chitin polymer. Plays an important role in cell-wall formation during both hyphal growth and conidiation. This chain is Chitin synthase A, found in Aspergillus oryzae (strain ATCC 42149 / RIB 40) (Yellow koji mold).